The primary structure comprises 551 residues: Methyl-accepting chemotaxis protein I (551 aa).

Residues Met-1 to Lys-6 lie on the Cytoplasmic side of the membrane. The chain crosses the membrane as a helical span at residues Ile-7–Phe-30. The Periplasmic segment spans residues Asn-31–Ser-190. A the 3 Arg may form a positively charged pocket, which binds the alpha-carboxyl group of the attractant AA region spans residues Arg-64–Arg-73. A helical membrane pass occupies residues Gln-191–Val-210. Residues Trp-211 to Phe-551 are Cytoplasmic-facing. The 53-residue stretch at Ala-216–Gly-268 folds into the HAMP domain. The 230-residue stretch at Gly-273–Glu-502 folds into the Methyl-accepting transducer domain. Gln-297 is modified (glutamate methyl ester (Gln)). A Glutamate methyl ester (Glu) modification is found at Glu-304. Gln-311 bears the Glutamate methyl ester (Gln) mark. A glutamate methyl ester (Glu) mark is found at Glu-493 and Glu-502.

The protein belongs to the methyl-accepting chemotaxis (MCP) protein family.

Its subcellular location is the cell inner membrane. Functionally, receptor for the attractant L-serine and related amino acids. Is also responsible for chemotaxis away from a wide range of repellents, including leucine, indole, and weak acids. Chemotactic-signal transducers respond to changes in the concentration of attractants and repellents in the environment, transduce a signal from the outside to the inside of the cell, and facilitate sensory adaptation through the variation of the level of methylation. Attractants increase the level of methylation while repellents decrease the level of methylation, the methyl groups are added by the methyltransferase CheR and removed by the methylesterase CheB. This Escherichia coli (strain K12) protein is Methyl-accepting chemotaxis protein I (tsr).